A 285-amino-acid polypeptide reads, in one-letter code: 1,4-dihydroxy-2-naphthoyl-CoA synthase (285 aa).

Residues Arg45, 84 to 89 (SGGDQK), Tyr97, 129 to 133 (YSIGG), Thr155, Ser161, Tyr258, and Lys273 contribute to the substrate site. 154 to 156 (QTG) provides a ligand contact to hydrogencarbonate.

It belongs to the enoyl-CoA hydratase/isomerase family. MenB subfamily. Homohexamer. Dimer of a homotrimer. The cofactor is hydrogencarbonate.

The catalysed reaction is 2-succinylbenzoyl-CoA + H(+) = 1,4-dihydroxy-2-naphthoyl-CoA + H2O. It functions in the pathway quinol/quinone metabolism; 1,4-dihydroxy-2-naphthoate biosynthesis; 1,4-dihydroxy-2-naphthoate from chorismate: step 6/7. It participates in quinol/quinone metabolism; menaquinone biosynthesis. With respect to regulation, inhibited by sulfite and nitrate. Functionally, converts o-succinylbenzoyl-CoA (OSB-CoA) to 1,4-dihydroxy-2-naphthoyl-CoA (DHNA-CoA). This is 1,4-dihydroxy-2-naphthoyl-CoA synthase from Escherichia coli (strain K12).